Here is a 260-residue protein sequence, read N- to C-terminus: Ribonuclease HII (260 aa).

The RNase H type-2 domain maps to 71-259 (RRIAGIDEAG…VREVLKASEQ (189 aa)). Aspartate 77, glutamate 78, and aspartate 169 together coordinate a divalent metal cation.

Belongs to the RNase HII family. Requires Mn(2+) as cofactor. It depends on Mg(2+) as a cofactor.

Its subcellular location is the cytoplasm. It catalyses the reaction Endonucleolytic cleavage to 5'-phosphomonoester.. In terms of biological role, endonuclease that specifically degrades the RNA of RNA-DNA hybrids. The protein is Ribonuclease HII of Geobacillus kaustophilus (strain HTA426).